A 1820-amino-acid chain; its full sequence is uncharacterized protein (1820 aa).

Disordered regions lie at residues M1–G73, T86–A158, G226–Y260, E286–E366, D453–S497, L519–A548, G577–P597, G619–G689, and H735–S830. Residues N20–N31 show a composition bias toward polar residues. Over residues T86 to H128 the composition is skewed to low complexity. A compositionally biased stretch (basic residues) spans H129 to T146. Residues S247–N259 show a composition bias toward low complexity. Positions V265–K308 form a coiled coil. Over residues D294–E305 the composition is skewed to basic and acidic residues. The segment covering A346–G358 has biased composition (low complexity). Residues T362–Q438 adopt a coiled-coil conformation. Positions D453–N463 are enriched in polar residues. S542 and S543 each carry phosphoserine. Low complexity predominate over residues G623–S632. Positions H655–T669 are enriched in gly residues. Positions N738–A769 are enriched in low complexity. Residues Q787–G818 are compositionally biased toward polar residues. PH domains are found at residues S909–R1003 and K1017–G1124. Phosphoserine occurs at positions 1073, 1075, and 1077. One can recognise a MyTH4 domain in the interval H1159–L1378. In terms of domain architecture, FERM spans H1389–V1712. 2 disordered regions span residues P1713–F1748 and A1764–K1820. The segment covering G1714–N1724 has biased composition (polar residues). The segment covering A1764 to H1781 has biased composition (low complexity). The segment covering H1805–K1820 has biased composition (basic and acidic residues).

This is an uncharacterized protein from Drosophila melanogaster (Fruit fly).